Reading from the N-terminus, the 804-residue chain is Leucine--tRNA ligase (804 aa).

The short motif at 40-51 is the 'HIGH' region element; sequence PYPSGAGLHVGH. Residues 576-580 carry the 'KMSKS' region motif; that stretch reads KMSKS. Lysine 579 provides a ligand contact to ATP.

This sequence belongs to the class-I aminoacyl-tRNA synthetase family.

It is found in the cytoplasm. It catalyses the reaction tRNA(Leu) + L-leucine + ATP = L-leucyl-tRNA(Leu) + AMP + diphosphate. This is Leucine--tRNA ligase from Staphylococcus epidermidis (strain ATCC 35984 / DSM 28319 / BCRC 17069 / CCUG 31568 / BM 3577 / RP62A).